A 197-amino-acid chain; its full sequence is Putative methyltransferase Mtx subunit A (197 aa).

It belongs to the MtrA family. As to quaternary structure, may be part of a complex composed of 3 subunits; MtxA, MtxH and MtxX.

In Methanosarcina acetivorans (strain ATCC 35395 / DSM 2834 / JCM 12185 / C2A), this protein is Putative methyltransferase Mtx subunit A (mtxA).